The chain runs to 710 residues: Polyribonucleotide nucleotidyltransferase (710 aa).

D488 and D494 together coordinate Mg(2+). The KH domain maps to 555-614 (PRIETITIPTDKIRDVIGSGGKVIREIVETTGAKVDVNDDGVIKVSSSDGASIKAALDWI). Positions 624–692 (GQIYKGKVVK…DRGKVRLSMK (69 aa)) constitute an S1 motif domain.

The protein belongs to the polyribonucleotide nucleotidyltransferase family. Mg(2+) is required as a cofactor.

The protein localises to the cytoplasm. It catalyses the reaction RNA(n+1) + phosphate = RNA(n) + a ribonucleoside 5'-diphosphate. Functionally, involved in mRNA degradation. Catalyzes the phosphorolysis of single-stranded polyribonucleotides processively in the 3'- to 5'-direction. In Maricaulis maris (strain MCS10) (Caulobacter maris), this protein is Polyribonucleotide nucleotidyltransferase.